We begin with the raw amino-acid sequence, 184 residues long: Ras-related protein Rap-1A (184 aa).

Residues 10 to 18, 29 to 35, Gly-60, and 116 to 119 each bind GTP; these read GSGGVGKSA, VEKYDPT, and NKCD. The Effector region signature appears at 32-40; the sequence is YDPTIEDSY. Cysteine methyl ester is present on Cys-181. The S-geranylgeranyl cysteine moiety is linked to residue Cys-181. A propeptide spans 182-184 (removed in mature form); it reads LLL.

It belongs to the small GTPase superfamily. Ras family. In terms of assembly, found in a complex, at least composed of ITGB1BP1, KRIT1 and RAP1A. Interacts (active GTP-bound form preferentially) with KRIT1 (via C-terminus FERM domain); the interaction does not induce the opening conformation of KRIT1. Found in a complex composed of CDH1, RAP1A and PKP3; PKP3 acts as a scaffold protein within the complex, the complex is required for CDH1 localization to mature desmosome cell junctions. In its GTP-bound form interacts with PLCE1 and RADIL. Interacts with SGSM1, SGSM2 and SGSM3. Interacts (via GTP-bound active form) with RAPGEF2 (via Ras-associating domain). Interacts with TBC1D21. Interacts with RAP1GDS1.

It is found in the cell membrane. Its subcellular location is the cytoplasm. The protein resides in the perinuclear region. The protein localises to the cell junction. It localises to the early endosome. The enzyme catalyses GTP + H2O = GDP + phosphate + H(+). With respect to regulation, activated by guanine nucleotide-exchange factors (GEF) EPAC and EPAC2 in a cAMP-dependent manner, and GFR. In terms of biological role, counteracts the mitogenic function of Ras, at least partly because it can interact with Ras GAPs and RAF in a competitive manner. Together with ITGB1BP1, regulates KRIT1 localization to microtubules and membranes. Plays a role in nerve growth factor (NGF)-induced neurite outgrowth. Plays a role in the regulation of embryonic blood vessel formation. Involved in the establishment of basal endothelial barrier function. Facilitates the progressive accumulation of CDH1 at mature desmosome junctions via cAMP-dependent signaling and its interaction with PKP3. May be involved in the regulation of the vascular endothelial growth factor receptor KDR expression at endothelial cell-cell junctions. This Bos taurus (Bovine) protein is Ras-related protein Rap-1A (RAP1A).